Consider the following 491-residue polypeptide: Monothiol glutaredoxin-S11 (491 aa).

Glutaredoxin domains lie at 151 to 253 (NKRL…NIPL), 287 to 389 (KERL…GIVA), and 394 to 491 (EDRL…TLSE). K411 is a glutathione binding site. C419 contacts [2Fe-2S] cluster. Glutathione contacts are provided by residues R448, F460, and 473-474 (CD).

This sequence belongs to the glutaredoxin family. CGFS subfamily.

Its subcellular location is the cytoplasm. Functionally, may only reduce GSH-thiol disulfides, but not protein disulfides. This Oryza sativa subsp. japonica (Rice) protein is Monothiol glutaredoxin-S11 (GRXS11).